A 94-amino-acid polypeptide reads, in one-letter code: DNA gyrase subunit A (94 aa).

One can recognise a Topo IIA-type catalytic domain in the interval 35–94 (LPDVRDGLKPVHRRILYGLNEQGMTPDKPYKKSARIVGDVMGKYHPHGDSSIYEAMVRMA).

Belongs to the type II topoisomerase GyrA/ParC subunit family. Heterotetramer, composed of two GyrA and two GyrB chains. In the heterotetramer, GyrA contains the active site tyrosine that forms a transient covalent intermediate with DNA, while GyrB binds cofactors and catalyzes ATP hydrolysis.

It is found in the cytoplasm. It catalyses the reaction ATP-dependent breakage, passage and rejoining of double-stranded DNA.. Its function is as follows. A type II topoisomerase that negatively supercoils closed circular double-stranded (ds) DNA in an ATP-dependent manner to modulate DNA topology and maintain chromosomes in an underwound state. Negative supercoiling favors strand separation, and DNA replication, transcription, recombination and repair, all of which involve strand separation. Also able to catalyze the interconversion of other topological isomers of dsDNA rings, including catenanes and knotted rings. Type II topoisomerases break and join 2 DNA strands simultaneously in an ATP-dependent manner. The protein is DNA gyrase subunit A of Staphylococcus epidermidis.